The sequence spans 1722 residues: Signal-induced proliferation-associated 1-like protein 2 (1722 aa).

The segment covering 1-12 (MSDPRQSQEEKH) has biased composition (basic and acidic residues). Disordered regions lie at residues 1 to 29 (MSDP…RIMQ) and 42 to 72 (NGNM…PAVP). Positions 45–56 (MGPTTSLNASNS) are enriched in polar residues. Position 148 is a phosphoserine (Ser-148). Positions 360–377 (GASAASQTQMPTGQTGNC) are enriched in polar residues. Residues 360-401 (GASAASQTQMPTGQTGNCESPLGSKEDLNSKENLDADEGDGK) form a disordered region. Phosphoserine is present on residues Ser-379 and Ser-383. Positions 383 to 401 (SKEDLNSKENLDADEGDGK) are enriched in basic and acidic residues. The Rap-GAP domain maps to 595-812 (LLKLDEQGLS…RTRQEYLKDL (218 aa)). A PDZ domain is found at 950-1026 (EMTLRRNGLG…VKVVIIQPHD (77 aa)). Ser-1029 is subject to Phosphoserine. 2 disordered regions span residues 1067-1245 (HRVP…FGSG) and 1330-1360 (EGSM…SKSS). 2 stretches are compositionally biased toward low complexity: residues 1093-1102 (QQLLQQAQAA) and 1119-1130 (SSPSNQSSSSDP). Basic and acidic residues-rich tracts occupy residues 1164-1183 (DGAR…ETKW) and 1194-1217 (YKER…HIGD). Positions 1219–1236 (SCSSHSSSNTLSSNTSSN) are enriched in low complexity. At Ser-1244 the chain carries Phosphoserine. The span at 1337–1360 (SEISSHSSGSHHSGSPSAHCSKSS) shows a compositional bias: low complexity. Phosphoserine occurs at positions 1461, 1472, 1478, 1488, 1549, 1552, and 1591. Positions 1654–1712 (LTGKVNQLELILRQLQTDLRKEKQDKAVLQAEVQHLRQDNMRLQEESQTATAQLRKFTE) form a coiled coil.

In Homo sapiens (Human), this protein is Signal-induced proliferation-associated 1-like protein 2 (SIPA1L2).